Consider the following 660-residue polypeptide: Transcription activator of gluconeogenesis CHGG_09150 (660 aa).

The span at M1–D12 shows a compositional bias: acidic residues. The interval M1–R52 is disordered. Basic and acidic residues-rich tracts occupy residues Q13–D24 and A36–R49. A DNA-binding region (zn(2)-C6 fungal-type) is located at residues C59–C87. 3 disordered regions span residues L98–S144, F170–G191, and P319–N368. The segment covering S129–S144 has biased composition (polar residues). Residues Q173–S184 show a composition bias toward low complexity. 2 stretches are compositionally biased toward polar residues: residues T320–P332 and T344–N368. The 72-residue stretch at S455–T526 folds into the PAS domain. The tract at residues A587–L613 is disordered.

Belongs to the ERT1/acuK family.

Its subcellular location is the nucleus. In terms of biological role, transcription factor which regulates nonfermentable carbon utilization. Activator of gluconeogenetic genes. In Chaetomium globosum (strain ATCC 6205 / CBS 148.51 / DSM 1962 / NBRC 6347 / NRRL 1970) (Soil fungus), this protein is Transcription activator of gluconeogenesis CHGG_09150.